Here is a 433-residue protein sequence, read N- to C-terminus: Mblk-1-related factor 1 (433 aa).

The region spanning Asn145–Glu197 is the HTH psq-type 1 domain. Residues Thr173 to Lys193 constitute a DNA-binding region (H-T-H motif). Positions Gly235–Pro254 are enriched in low complexity. 2 disordered regions span residues Gly235–Pro278 and Ala304–Gly338. Residues Ala304–Glu319 show a composition bias toward polar residues. Residues Lys320 to Arg332 are compositionally biased toward basic and acidic residues. The region spanning Arg334–Met386 is the HTH psq-type 2 domain. Residues Val362 to Glu382 constitute a DNA-binding region (H-T-H motif). The interval Leu393–Val433 is disordered. Positions His396–Val408 are enriched in polar residues. Residues Thr409 to Thr424 show a composition bias toward low complexity.

In terms of tissue distribution, expressed in AIM, RIC, AIZ, ADF, ADL, ASK, AWA, AUA, AIN, RIH (or RIR) and RIF head neurons and, in PVP, PVQ and DVA (or DVC) tail neurons, some intestinal cells, somatic gonad and vulva.

Its subcellular location is the nucleus. Functionally, may act as transcription activator. Plays a role in neurogenesis by regulating neurite pruning between left and right AIM neurons and left and right RIF neurons during larval development. Regulates olfactory plasticity. The sequence is that of Mblk-1-related factor 1 from Caenorhabditis elegans.